The chain runs to 437 residues: Vasoactive intestinal polypeptide receptor 2 (437 aa).

The signal sequence occupies residues 1–22 (MRASVVLTCYCWLLVRVSSIHP). Residues 23-123 (ECRFHLEIQE…EDESKITFYI (101 aa)) lie on the Extracellular side of the membrane. Disulfide bonds link Cys37–Cys60, Cys51–Cys92, and Cys74–Cys108. Residues Asn57, Asn87, and Asn91 are each glycosylated (N-linked (GlcNAc...) asparagine). Residues 124–149 (LVKAIYTLGYSVSLMSLTTGSIIICL) traverse the membrane as a helical segment. The Cytoplasmic portion of the chain corresponds to 150 to 157 (FRKLHCTR). A helical membrane pass occupies residues 158–179 (NYIHLNLFLSFMLRAISVLVKD). Topologically, residues 180-202 (SVLYSSSGTLRCHDQPGSWVGCK) are extracellular. Residues Cys201 and Cys270 are joined by a disulfide bond. A helical transmembrane segment spans residues 203–227 (LSLVFFQYCIMANFYWLLVEGLYLH). The Cytoplasmic portion of the chain corresponds to 228 to 238 (TLLVAILPPSR). The helical transmembrane segment at 239–260 (CFLAYLLIGWGIPSVCIGAWIA) threads the bilayer. The Extracellular portion of the chain corresponds to 261–279 (TRLSLEDTGCWDTNDHSIP). The helical transmembrane segment at 280–303 (WWVIRMPILISIVVNFALFISIVR) threads the bilayer. Residues 304–324 (ILLQKLTSPDVGGNDQSQYKR) are Cytoplasmic-facing. A helical transmembrane segment spans residues 325-345 (LAKSTLLLIPLFGVHYMVFAA). The Extracellular portion of the chain corresponds to 346 to 353 (FPIGISST). The helical transmembrane segment at 354–377 (YQILFELCVGSFQGLVVAVLYCFL) threads the bilayer. Over 378–437 (NSEVQCELKRRWRGLCLTQPGSRDYRLHSWSMSRNGSESALQIHRGSRTQSFLQSETSVI) the chain is Cytoplasmic.

This sequence belongs to the G-protein coupled receptor 2 family. In terms of assembly, interacts with ADCYAP1/PACAP (via N-terminal extracellular domain); activated by PACAP27 and CAPAC38 neuropeptides. Interacts with VIP; the interaction results in VIPR1 activation. In terms of tissue distribution, mainly in the thalamus, hippocampus and in the suprachiasmatic nucleus.

Its subcellular location is the cell membrane. Its function is as follows. G protein-coupled receptor activated by the neuropeptides vasoactive intestinal peptide (VIP) and pituitary adenylate cyclase-activating polypeptide (ADCYAP1/PACAP). Binds VIP and both PACAP27 and PACAP38 bioactive peptides with the order of ligand affinity of VIP = PACAP38 &gt; PACAP27. Ligand binding causes a conformation change that triggers signaling via guanine nucleotide-binding proteins (G proteins) and modulates the activity of downstream effectors. Activates cAMP-dependent pathway. May be coupled to phospholipase C. The polypeptide is Vasoactive intestinal polypeptide receptor 2 (Rattus norvegicus (Rat)).